A 303-amino-acid chain; its full sequence is Acetaldehyde dehydrogenase (303 aa).

The active-site Acyl-thioester intermediate is Cys131. NAD(+) is bound by residues 162–170 (SVGPGTRAN) and Asn273.

Belongs to the acetaldehyde dehydrogenase family.

It carries out the reaction acetaldehyde + NAD(+) + CoA = acetyl-CoA + NADH + H(+). In Marinomonas sp. (strain MWYL1), this protein is Acetaldehyde dehydrogenase.